We begin with the raw amino-acid sequence, 673 residues long: Pesticin receptor (673 aa).

Positions 1 to 22 (MKMTRLYPLALGGLLLPAIANA) are cleaved as a signal peptide. Residues 30–37 (STLEVTAS) carry the TonB box motif. Residues 41 to 155 (SRSASANNVS…QGGIINIVTQ (115 aa)) enclose the TBDR plug domain. A TBDR beta-barrel domain is found at 160–672 (TPRGYIEGGV…TVGINTRIDF (513 aa)). The TonB C-terminal box motif lies at 657-673 (QVNMGRTVGINTRIDFF).

It belongs to the TonB-dependent receptor family.

Its subcellular location is the cell outer membrane. Receptor for the bacteriocin pesticin and for the siderophore yersiniabactin. In Yersinia enterocolitica, this protein is Pesticin receptor (fyuA).